The primary structure comprises 188 residues: Elongation factor P (188 aa).

This sequence belongs to the elongation factor P family.

Its subcellular location is the cytoplasm. It functions in the pathway protein biosynthesis; polypeptide chain elongation. Functionally, involved in peptide bond synthesis. Stimulates efficient translation and peptide-bond synthesis on native or reconstituted 70S ribosomes in vitro. Probably functions indirectly by altering the affinity of the ribosome for aminoacyl-tRNA, thus increasing their reactivity as acceptors for peptidyl transferase. This chain is Elongation factor P, found in Flavobacterium johnsoniae (strain ATCC 17061 / DSM 2064 / JCM 8514 / BCRC 14874 / CCUG 350202 / NBRC 14942 / NCIMB 11054 / UW101) (Cytophaga johnsonae).